Reading from the N-terminus, the 338-residue chain is Methionyl-tRNA formyltransferase (338 aa).

Position 110 to 113 (110 to 113) interacts with (6S)-5,6,7,8-tetrahydrofolate; that stretch reads SLLP.

The protein belongs to the Fmt family.

It carries out the reaction L-methionyl-tRNA(fMet) + (6R)-10-formyltetrahydrofolate = N-formyl-L-methionyl-tRNA(fMet) + (6S)-5,6,7,8-tetrahydrofolate + H(+). In terms of biological role, attaches a formyl group to the free amino group of methionyl-tRNA(fMet). The formyl group appears to play a dual role in the initiator identity of N-formylmethionyl-tRNA by promoting its recognition by IF2 and preventing the misappropriation of this tRNA by the elongation apparatus. The protein is Methionyl-tRNA formyltransferase of Synechococcus sp. (strain CC9902).